We begin with the raw amino-acid sequence, 50 residues long: Protein PsbN (50 aa).

Residues 14–34 (IAVTILAILLALTGFGLWSAF) traverse the membrane as a helical segment.

It belongs to the PsbN family.

It localises to the cellular thylakoid membrane. Its function is as follows. May play a role in photosystem I and II biogenesis. The protein is Protein PsbN of Prochlorococcus marinus (strain MIT 9215).